A 252-amino-acid chain; its full sequence is Imidazole glycerol phosphate synthase subunit HisF (252 aa).

Residues D11 and D130 contribute to the active site.

Belongs to the HisA/HisF family. As to quaternary structure, heterodimer of HisH and HisF.

It is found in the cytoplasm. It carries out the reaction 5-[(5-phospho-1-deoxy-D-ribulos-1-ylimino)methylamino]-1-(5-phospho-beta-D-ribosyl)imidazole-4-carboxamide + L-glutamine = D-erythro-1-(imidazol-4-yl)glycerol 3-phosphate + 5-amino-1-(5-phospho-beta-D-ribosyl)imidazole-4-carboxamide + L-glutamate + H(+). Its pathway is amino-acid biosynthesis; L-histidine biosynthesis; L-histidine from 5-phospho-alpha-D-ribose 1-diphosphate: step 5/9. In terms of biological role, IGPS catalyzes the conversion of PRFAR and glutamine to IGP, AICAR and glutamate. The HisF subunit catalyzes the cyclization activity that produces IGP and AICAR from PRFAR using the ammonia provided by the HisH subunit. In Azoarcus sp. (strain BH72), this protein is Imidazole glycerol phosphate synthase subunit HisF.